The chain runs to 298 residues: ER-bound oxygenase mpaB (298 aa).

The Lumenal portion of the chain corresponds to 1–24 (MDKGTSFFTTPSFSATTRAIFNTM). Residues 25–45 (PQWFSFAVGLLIAYPLLINSL) traverse the membrane as a helical segment. The Cytoplasmic segment spans residues 46-298 (RYRRLKQLQK…RLRKAMLYVE (253 aa)).

Belongs to the mpaB oxygenase family.

The protein resides in the endoplasmic reticulum membrane. The enzyme catalyses 4-farnesyl-3,5-dihydroxy-6-methylphthalide + AH2 + 2 O2 = (4E,8E)-10-(4,6-dihydroxy-7-methyl-3-oxo-1,3-dihydro-2-benzofuran-5-yl)-4,8-dimethyldeca-4,8-dienoate + acetone + A + H2O + H(+). Its pathway is secondary metabolite biosynthesis; terpenoid biosynthesis. Functionally, ER-bound oxygenase; part of the gene cluster that mediates the biosynthesis of mycophenolic acid (MPA), the first isolated antibiotic natural product in the world obtained from a culture of Penicillium brevicompactum in 1893. MpaB catalyzes the oxidative cleavage the C19-C20 double bond in farnesyl-DHMP (FDHMP) to yield FDHMP-3C via a mycophenolic aldehyde intermediate. The first step of the pathway is the synthesis of 5-methylorsellinic acid (5MOA) by the cytosolic polyketide synthase mpaC. 5MOA is then converted to the phthalide compound 5,7-dihydroxy-4,6-dimethylphthalide (DHMP) by the endoplasmic reticulum-bound cytochrome P450 monooxygenase mpaDE. MpaDE first catalyzes hydroxylation of 5-MOA to 4,6-dihydroxy-2-(hydroxymethyl)-3-methylbenzoic acid (DHMB). MpaDE then acts as a lactone synthase that catalyzes the ring closure to convert DHMB into DHMP. The next step is the prenylation of DHMP by the Golgi apparatus-associated prenyltransferase mpaA to yield farnesyl-DHMP (FDHMP). The ER-bound oxygenase mpaB then mediates the oxidative cleavage the C19-C20 double bond in FDHMP to yield FDHMP-3C via a mycophenolic aldehyde intermediate. The O-methyltransferase mpaG catalyzes the methylation of FDHMP-3C to yield MFDHMP-3C. After the cytosolic methylation of FDHMP-3C, MFDHMP-3C enters into peroxisomes probably via free diffusion due to its low molecular weight. Upon a peroxisomal CoA ligation reaction, catalyzed by a beta-oxidation component enzyme acyl-CoA ligase ACL891, MFDHMP-3C-CoA would then be restricted to peroxisomes for the following beta-oxidation pathway steps. The peroxisomal beta-oxidation machinery than converts MFDHMP-3C-CoA into MPA_CoA, via a beta-oxidation chain-shortening process. Finally mpaH acts as a peroxisomal acyl-CoA hydrolase with high substrate specificity toward MPA-CoA to release the final product MPA. This Penicillium roqueforti (strain FM164) protein is ER-bound oxygenase mpaB.